The following is a 129-amino-acid chain: Flagellar assembly factor FliW 2 (129 aa).

The protein belongs to the FliW family. In terms of assembly, interacts with translational regulator CsrA and flagellin(s).

The protein resides in the cytoplasm. Functionally, acts as an anti-CsrA protein, binds CsrA and prevents it from repressing translation of its target genes, one of which is flagellin. Binds to flagellin and participates in the assembly of the flagellum. The sequence is that of Flagellar assembly factor FliW 2 from Helicobacter pylori (strain J99 / ATCC 700824) (Campylobacter pylori J99).